Reading from the N-terminus, the 377-residue chain is Chaperone protein DnaJ (377 aa).

Residues 6–70 (DYYKILGIDK…EKKAIYDKYG (65 aa)) enclose the J domain. Residues 143–225 (GRVISQKLDK…CKGAKKIKES (83 aa)) form a CR-type zinc finger. Residues C156, C159, C173, C176, C199, C202, C213, and C216 each contribute to the Zn(2+) site. CXXCXGXG motif repeat units follow at residues 156–163 (CESCNGTG), 173–180 (CSTCNGRG), 199–206 (CSTCNGLG), and 213–220 (CPSCKGAK).

It belongs to the DnaJ family. Homodimer. Zn(2+) serves as cofactor.

Its subcellular location is the cytoplasm. Its function is as follows. Participates actively in the response to hyperosmotic and heat shock by preventing the aggregation of stress-denatured proteins and by disaggregating proteins, also in an autonomous, DnaK-independent fashion. Unfolded proteins bind initially to DnaJ; upon interaction with the DnaJ-bound protein, DnaK hydrolyzes its bound ATP, resulting in the formation of a stable complex. GrpE releases ADP from DnaK; ATP binding to DnaK triggers the release of the substrate protein, thus completing the reaction cycle. Several rounds of ATP-dependent interactions between DnaJ, DnaK and GrpE are required for fully efficient folding. Also involved, together with DnaK and GrpE, in the DNA replication of plasmids through activation of initiation proteins. This is Chaperone protein DnaJ from Mycoplasmopsis pulmonis (strain UAB CTIP) (Mycoplasma pulmonis).